A 208-amino-acid polypeptide reads, in one-letter code: Large ribosomal subunit protein uL3 (208 aa).

The tract at residues 126 to 150 (NQSRGPMAHGSRYHRRPGSMGPVAP) is disordered.

The protein belongs to the universal ribosomal protein uL3 family. Part of the 50S ribosomal subunit. Forms a cluster with proteins L14 and L19.

One of the primary rRNA binding proteins, it binds directly near the 3'-end of the 23S rRNA, where it nucleates assembly of the 50S subunit. The sequence is that of Large ribosomal subunit protein uL3 from Exiguobacterium sibiricum (strain DSM 17290 / CCUG 55495 / CIP 109462 / JCM 13490 / 255-15).